The following is a 77-amino-acid chain: Large ribosomal subunit protein eL20 (77 aa).

This sequence belongs to the eukaryotic ribosomal protein eL20 family. In terms of assembly, part of the 50S ribosomal subunit. Binds 23S rRNA.

In Thermococcus onnurineus (strain NA1), this protein is Large ribosomal subunit protein eL20.